The chain runs to 357 residues: Dynein axonemal assembly factor 10 (357 aa).

4 WD repeats span residues 80–127 (EFTN…IPIW), 132–170 (AHQG…NSAN), 184–223 (EQTN…IQST), and 277–321 (EPNQ…IDKV).

Interacts with PIH1D1; the interaction associates DNAAF10 with the R2TP complex. Interacts with several dynein axonemal assembly factors.

It localises to the dynein axonemal particle. Key assembly factor specifically required for the stability of axonemal dynein heavy chains in cytoplasm. This chain is Dynein axonemal assembly factor 10 (dnaaf10), found in Dictyostelium discoideum (Social amoeba).